The sequence spans 106 residues: UPF0145 protein BF0270 (106 aa).

Belongs to the UPF0145 family.

The protein is UPF0145 protein BF0270 of Bacteroides fragilis (strain YCH46).